Here is a 379-residue protein sequence, read N- to C-terminus: Serpin B5 (379 aa).

N-linked (GlcNAc...) asparagine glycosylation is found at N133, N176, and N361.

Belongs to the serpin family. Ov-serpin subfamily.

The protein resides in the secreted. It localises to the extracellular space. May not exhibit serine protease inhibitory activity. This Xenopus tropicalis (Western clawed frog) protein is Serpin B5 (serpinb5).